A 245-amino-acid polypeptide reads, in one-letter code: tRNA pseudouridine synthase A (245 aa).

D52 functions as the Nucleophile in the catalytic mechanism. Position 111 (Y111) interacts with substrate.

This sequence belongs to the tRNA pseudouridine synthase TruA family. In terms of assembly, homodimer.

It carries out the reaction uridine(38/39/40) in tRNA = pseudouridine(38/39/40) in tRNA. Formation of pseudouridine at positions 38, 39 and 40 in the anticodon stem and loop of transfer RNAs. This Rickettsia akari (strain Hartford) protein is tRNA pseudouridine synthase A.